The chain runs to 154 residues: RING finger protein 11 (154 aa).

A compositionally biased stretch (polar residues) spans 1–12 (MGNCLKSPTSDD). A disordered region spans residues 1–52 (MGNCLKSPTSDDISLLHESQSDRASFGEGTEPDQEPPPPYQEQVPVPIYHPT). A lipid anchor (N-myristoyl glycine) is attached at glycine 2. The S-palmitoyl cysteine moiety is linked to residue cysteine 4. 2 positions are modified to phosphoserine: serine 14 and serine 25. Positions 37-40 (PPPY) match the PPxY motif motif. Residues 99–140 (CVICMMDFVYGDPIRFLPCMHIYHLDCIDDWLMRSFTCPSCM) form an RING-type zinc finger. Residue threonine 135 is modified to Phosphothreonine; by PKB/AKT1.

As to quaternary structure, interacts (when phosphorylated) with 14-3-3. Interacts with the E3 ubiquitin-ligases NEDD4, ITCH, SMURF2 and WWP1. Also interacts with the E2 ubiquitin-conjugating enzymes UBE2D1 and UBE2N, but neither with CDC34, nor with UBE2L3. Interacts with ZNF350, EPS15 and STAMBP. After TNF stimulation, interacts with TAX1BP1, TNFAIP3 and RIPK1; these interactions are transient and they are lost after 1 hour of stimulation with TNF. Interacts with GGA1. Ubiquitinated in the presence of ITCH, SMURF2 and UBE2D1, as well as WWP1. Post-translationally, phosphorylation by PKB/AKT1 may accelerate degradation by the proteasome. In terms of processing, acylation at both Gly-2 and Cys-4 is required for proper localization to the endosomes.

It localises to the early endosome. The protein localises to the recycling endosome. It is found in the cytoplasm. The protein resides in the nucleus. In terms of biological role, essential component of a ubiquitin-editing protein complex, comprising also TNFAIP3, ITCH and TAX1BP1, that ensures the transient nature of inflammatory signaling pathways. Promotes the association of TNFAIP3 to RIPK1 after TNF stimulation. TNFAIP3 deubiquitinates 'Lys-63' polyubiquitin chains on RIPK1 and catalyzes the formation of 'Lys-48'-polyubiquitin chains. This leads to RIPK1 proteasomal degradation and consequently termination of the TNF- or LPS-mediated activation of NF-kappa-B. Recruits STAMBP to the E3 ubiquitin-ligase SMURF2 for ubiquitination, leading to its degradation by the 26S proteasome. The chain is RING finger protein 11 (Rnf11) from Mus musculus (Mouse).